The following is a 399-amino-acid chain: Elongation factor Tu (399 aa).

Residues 10 to 209 (NPHVNIGTIG…EVDSYIPTPE (200 aa)) enclose the tr-type G domain. The interval 19–26 (GHVYHGKT) is G1. 19–26 (GHVYHGKT) is a binding site for GTP. Residue Thr-26 participates in Mg(2+) binding. A G2 region spans residues 60–64 (GITIA). Residues 81–84 (DCPG) are G3. GTP-binding positions include 81–85 (DCPGH) and 136–139 (NKQD). The segment at 136 to 139 (NKQD) is G4. The interval 174–176 (SAL) is G5.

The protein belongs to the TRAFAC class translation factor GTPase superfamily. Classic translation factor GTPase family. EF-Tu/EF-1A subfamily. Monomer.

It is found in the cytoplasm. It carries out the reaction GTP + H2O = GDP + phosphate + H(+). GTP hydrolase that promotes the GTP-dependent binding of aminoacyl-tRNA to the A-site of ribosomes during protein biosynthesis. The chain is Elongation factor Tu from Helicobacter pylori (strain J99 / ATCC 700824) (Campylobacter pylori J99).